Here is a 669-residue protein sequence, read N- to C-terminus: Zinc finger MYM-type protein 5 (669 aa).

Glycyl lysine isopeptide (Lys-Gly) (interchain with G-Cter in SUMO2) cross-links involve residues lysine 88, lysine 91, lysine 134, lysine 149, lysine 166, and lysine 225. 4 consecutive MYM-type zinc fingers follow at residues 265–299 (HLFC…KKAN), 311–351 (QEFY…RHEV), 358–393 (HKLC…KSTG), and 404–431 (KRFC…ASEN). Residues lysine 443, lysine 455, lysine 462, and lysine 552 each participate in a glycyl lysine isopeptide (Lys-Gly) (interchain with G-Cter in SUMO2) cross-link.

In terms of assembly, interacts (via N-terminal 120 amino acid region) with ETV5 (via C-terminal).

The protein resides in the nucleus. In terms of biological role, functions as a transcriptional regulator. This Homo sapiens (Human) protein is Zinc finger MYM-type protein 5 (ZMYM5).